We begin with the raw amino-acid sequence, 234 residues long: MATLFTATVPSHHRFVSPSQHPKQSLLSQSLSVTFTENPQPTAVVTLQEQQLTDWITSPVTRRFGIGAGFTWAGFLAFGVVSEQMKKSRLDVFQEEDNTRGLEKQEEIILPNGIRYYDLQVGSGATPSSGYLVVFDVKGQVHGTEQVFVDTFGGKGKSLAMVMDSRPYSKGLCQGIEHVLRSMKAGGKRRVIIPPSLGFGDRNVEFGQGLEIPPSATLDYIIEVDTVYCFQTIV.

A chloroplast-targeting transit peptide spans 1–28 (MATLFTATVPSHHRFVSPSQHPKQSLLS). The region spanning 130 to 228 (GYLVVFDVKG…DYIIEVDTVY (99 aa)) is the PPIase FKBP-type domain.

Belongs to the FKBP-type PPIase family.

The protein resides in the plastid. Its subcellular location is the chloroplast thylakoid lumen. It carries out the reaction [protein]-peptidylproline (omega=180) = [protein]-peptidylproline (omega=0). Functionally, PPIases accelerate the folding of proteins. It catalyzes the cis-trans isomerization of proline imidic peptide bonds in oligopeptides. The sequence is that of Peptidyl-prolyl cis-trans isomerase FKBP17-3, chloroplastic (FKBP17-3) from Arabidopsis thaliana (Mouse-ear cress).